The chain runs to 145 residues: Putative type I specificity subunit S.MpnORF289P C-terminus (145 aa).

This sequence belongs to the type-I restriction system S methylase family. The methyltransferase is composed of M and S polypeptides.

In terms of biological role, the C-terminal section of a specificity (S) subunit of a type I methyltransferase (MTase); this subunit dictates DNA sequence specificity. The single R subunit has multiple frameshifts and is probably not expressed. The chain is Putative type I specificity subunit S.MpnORF289P C-terminus from Mycoplasma pneumoniae (strain ATCC 29342 / M129 / Subtype 1) (Mycoplasmoides pneumoniae).